We begin with the raw amino-acid sequence, 363 residues long: NAD(P)H-quinone oxidoreductase subunit 1, chloroplastic (363 aa).

6 helical membrane passes run 27 to 47 (VWLLIPIFILVLGIVIGVLVI), 104 to 124 (IAVIAILLSYLVIPFGYHLVL), 127 to 147 (LSIGVFLWIAISSIAPIGLLM), 248 to 268 (YSGIKFGLFYVASYLNLLVSS), 300 to 320 (VFGMTIGIFITLAKAYLFLFI), and 343 to 363 (FLLPISLGNLLLTTSFQLFSL).

Belongs to the complex I subunit 1 family. In terms of assembly, NDH is composed of at least 16 different subunits, 5 of which are encoded in the nucleus.

It localises to the plastid. Its subcellular location is the chloroplast thylakoid membrane. It carries out the reaction a plastoquinone + NADH + (n+1) H(+)(in) = a plastoquinol + NAD(+) + n H(+)(out). The enzyme catalyses a plastoquinone + NADPH + (n+1) H(+)(in) = a plastoquinol + NADP(+) + n H(+)(out). Functionally, NDH shuttles electrons from NAD(P)H:plastoquinone, via FMN and iron-sulfur (Fe-S) centers, to quinones in the photosynthetic chain and possibly in a chloroplast respiratory chain. The immediate electron acceptor for the enzyme in this species is believed to be plastoquinone. Couples the redox reaction to proton translocation, and thus conserves the redox energy in a proton gradient. The sequence is that of NAD(P)H-quinone oxidoreductase subunit 1, chloroplastic from Ranunculus macranthus (Large buttercup).